Reading from the N-terminus, the 227-residue chain is Mitochondrial inner membrane protease ATP23 (227 aa).

His-124 contacts a divalent metal cation. The active site involves Glu-125. Position 128 (His-128) interacts with a divalent metal cation.

This sequence belongs to the peptidase M76 family. In terms of assembly, interacts with ATP6.

The protein localises to the mitochondrion inner membrane. Its function is as follows. Has a dual role in the assembly of mitochondrial ATPase. Acts as a protease that removes the N-terminal 10 residues of mitochondrial ATPase CF(0) subunit 6 (ATP6) at the intermembrane space side. Also involved in the correct assembly of the membrane-embedded ATPase CF(0) particle, probably mediating association of ATP6 with the subunit 9 ring. This chain is Mitochondrial inner membrane protease ATP23 (ATP23), found in Saccharomyces cerevisiae (strain YJM789) (Baker's yeast).